We begin with the raw amino-acid sequence, 227 residues long: Ribonuclease 3 (227 aa).

The RNase III domain occupies 7–132 (LTAFMDRLGY…VIAAVYLDGG (126 aa)). Glu-45 contributes to the Mg(2+) binding site. Residue Asp-49 is part of the active site. Mg(2+) is bound by residues Asp-118 and Glu-121. Glu-121 is an active-site residue. Residues 157-226 (DAKTALQEWA…AKDLLAQLAG (70 aa)) enclose the DRBM domain.

The protein belongs to the ribonuclease III family. Homodimer. Mg(2+) serves as cofactor.

The protein localises to the cytoplasm. The enzyme catalyses Endonucleolytic cleavage to 5'-phosphomonoester.. Digests double-stranded RNA. Involved in the processing of primary rRNA transcript to yield the immediate precursors to the large and small rRNAs (23S and 16S). Processes some mRNAs, and tRNAs when they are encoded in the rRNA operon. Processes pre-crRNA and tracrRNA of type II CRISPR loci if present in the organism. The polypeptide is Ribonuclease 3 (Jannaschia sp. (strain CCS1)).